Consider the following 204-residue polypeptide: MGTSGADLENIVLSLGLHSGFLGIFDKHFPGFLNVNKPSFAIVNTGDIIQGGLHWIAFAFDNVTSTFFMFDPFGWSDMELYRKYEFQYHRILKSTALTKPSRCIKLVKSKEAVQCTCSAACGLFCCLFLASFYHYPTFPMRGNPIIDLVDGIPPTKLHSSYGIYLTHCNQKKLIAWLLSNSAYFRKNAMLMIHNTRLYYLYTHL.

Active-site residues include His-54, Asp-71, and Cys-121.

Belongs to the peptidase C5 family. In terms of assembly, interacts with protease cofactor pVI-C; this interaction is necessary for protease activation.

It is found in the virion. The protein resides in the host nucleus. The catalysed reaction is Cleaves proteins of the adenovirus and its host cell at two consensus sites: -Yaa-Xaa-Gly-Gly-|-Xaa- and -Yaa-Xaa-Gly-Xaa-|-Gly- (in which Yaa is Met, Ile or Leu, and Xaa is any amino acid).. Its activity is regulated as follows. Requires DNA and protease cofactor for maximal activation. Inside nascent virions, becomes partially activated by binding to the viral DNA, allowing it to cleave the cofactor that binds to the protease and fully activates it. Actin, like the viral protease cofactor, seems to act as a cofactor in the cleavage of cytokeratin 18 and of actin itself. Cleaves viral precursor proteins (pTP, pIIIa, pVI, pVII, pVIII, and pX) inside newly assembled particles giving rise to mature virions. Protease complexed to its cofactor slides along the viral DNA to specifically locate and cleave the viral precursors. Mature virions have a weakened organization compared to the unmature virions, thereby facilitating subsequent uncoating. Without maturation, the particle lacks infectivity and is unable to uncoat. Late in adenovirus infection, in the cytoplasm, may participate in the cytoskeleton destruction. Cleaves host cell cytoskeletal keratins K7 and K18. This Frog adenovirus 1 (strain ATCC VR-896) (FrAdV-1) protein is Protease.